The following is a 271-amino-acid chain: Aquaporin-1 (271 aa).

The Cytoplasmic portion of the chain corresponds to 1–11 (MASEFKKKIFW). Residues 12–29 (RAVVAEFLAMTLFIFISI) traverse the membrane as a helical segment. The Extracellular portion of the chain corresponds to 30 to 48 (GSALGFQYPVRNNQTSGAA). A glycan (N-linked (GlcNAc...) asparagine) is linked at asparagine 42. A helical transmembrane segment spans residues 49-67 (QDNVKVSLAFGLSIATLAQ). At 68 to 70 (SVG) the chain is on the cytoplasmic side. An intramembrane segment occupies 71–84 (HISGAHLNPAVTLG). Residues 78–80 (NPA) carry the NPA 1 motif. Residues 85–92 (LLLSCQIS) are Cytoplasmic-facing. Residues 93–111 (VLRAVMYIIAQCVGAIVAT) traverse the membrane as a helical segment. Over 112 to 135 (AILSGITSSLPGNSLGLNSLAPGV) the chain is Extracellular. A helical membrane pass occupies residues 136–155 (DSGQGLGIEIIGTLQLVLCV). The Cytoplasmic segment spans residues 156–165 (LATTDRRRRD). A helical transmembrane segment spans residues 166–183 (LGGSAPLAIGFSVALGHL). Residues 184 to 188 (LAIDY) are Extracellular-facing. An intramembrane segment occupies 189–201 (TGCGINPARSFGS). An NPA 2 motif is present at residues 194–196 (NPA). Residues 202–208 (AVITHNF) are Extracellular-facing. A helical transmembrane segment spans residues 209-226 (QDHWVFWVGPFIGGALAV). Topologically, residues 227 to 271 (LIYDFILAPRSSDLTDRVKVWTSGQVEEYDLDGDDINSRVEMKPK) are cytoplasmic. The residue at position 249 (serine 249) is a Phosphoserine. The residue at position 255 (tyrosine 255) is a Phosphotyrosine. At serine 264 the chain carries Phosphoserine.

Belongs to the MIP/aquaporin (TC 1.A.8) family. In terms of assembly, homotetramer; each monomer provides an independent water pore. Component of the ankyrin-1 complex in the erythrocyte, composed of ANK1, RHCE, RHAG, SLC4A1, EPB42, GYPA, GYPB and AQP1. Interacts with EPHB2; involved in endolymph production in the inner ear. Identified in a complex with STOM. Interacts (via the N-terminal) with ANK1 (via ANK 1-5 repeats). Interacts (via the C-terminal) with EPB42.

It is found in the cell membrane. It catalyses the reaction H2O(in) = H2O(out). The catalysed reaction is nitric oxide(out) = nitric oxide(in). The enzyme catalyses CO2(out) = CO2(in). It carries out the reaction glycerol(in) = glycerol(out). It catalyses the reaction H2O2(out) = H2O2(in). The catalysed reaction is K(+)(in) = K(+)(out). The enzyme catalyses Na(+)(in) = Na(+)(out). Forms a water channel that facilitates the transport of water across cell membranes, playing a crucial role in water homeostasis in various tissues. Could also be permeable to small solutes including hydrogen peroxide, glycerol and gases such as amonnia (NH3), nitric oxide (NO) and carbon dioxide (CO2). Recruited to the ankyrin-1 complex, a multiprotein complex of the erythrocyte membrane, it could be part of a CO2 metabolon, linking facilitated diffusion of CO2 across the membrane, anion exchange of Cl(-)/HCO3(-) and interconversion of dissolved CO2 and carbonic acid in the cytosol. In vitro, it shows non-selective gated cation channel activity and may be permeable to cations like K(+) and Na(+) in vivo. This Sus scrofa (Pig) protein is Aquaporin-1.